We begin with the raw amino-acid sequence, 163 residues long: Fatty acid-binding protein homolog (163 aa).

An N-terminal signal peptide occupies residues 1-23 (MRCLVALILTVLIVTPEVEAKTL).

The protein belongs to the calycin superfamily. Fatty-acid binding protein (FABP) family. Abundant in the fluid surrounding the developing embryo of Ascaris suum.

In terms of biological role, may play a role in sequestering potentially toxic fatty acids and their peroxidation products, or it may be involved in the maintenance of the impermeable lipid layer of the eggshell. This chain is Fatty acid-binding protein homolog, found in Ascaris suum (Pig roundworm).